Reading from the N-terminus, the 310-residue chain is Probable L,D-transpeptidase ErfK/SrfK (310 aa).

The first 21 residues, 1-21 (MRRVNILCSFALLFASHTSLA), serve as a signal peptide directing secretion. The L,D-TPase catalytic domain occupies 96–231 (KGIVVNVAEM…VPVGTRVQII (136 aa)). Histidine 191 serves as the catalytic Proton donor/acceptor. Cysteine 207 acts as the Nucleophile in catalysis.

Belongs to the YkuD family. As to quaternary structure, interacts with DsbG.

It localises to the periplasm. It functions in the pathway cell wall biogenesis; peptidoglycan biosynthesis. Responsible, at least in part, for anchoring of the major outer membrane lipoprotein (Lpp, also known as the Braun lipoprotein) to the peptidoglycan via a meso-diaminopimelyl-L-Lys- bond on the terminal residue of Lpp. In Escherichia coli (strain K12), this protein is Probable L,D-transpeptidase ErfK/SrfK (erfK).